Reading from the N-terminus, the 189-residue chain is GTP cyclohydrolase 1 (189 aa).

Zn(2+)-binding residues include C79, H82, and C150.

The protein belongs to the GTP cyclohydrolase I family. In terms of assembly, homomer.

The enzyme catalyses GTP + H2O = 7,8-dihydroneopterin 3'-triphosphate + formate + H(+). Its pathway is cofactor biosynthesis; 7,8-dihydroneopterin triphosphate biosynthesis; 7,8-dihydroneopterin triphosphate from GTP: step 1/1. In Rickettsia rickettsii (strain Iowa), this protein is GTP cyclohydrolase 1.